Here is a 171-residue protein sequence, read N- to C-terminus: Dual specificity protein phosphatase OPG106 (171 aa).

The 149-residue stretch at 23 to 171 folds into the Tyrosine-protein phosphatase domain; the sequence is SPTIMTRVTN…IIEKYVIDKN (149 aa). Cys-110 acts as the Phosphocysteine intermediate in catalysis.

Belongs to the protein-tyrosine phosphatase family. Non-receptor class dual specificity subfamily. Homodimer.

Its subcellular location is the virion. The protein resides in the host cytoplasm. It carries out the reaction O-phospho-L-tyrosyl-[protein] + H2O = L-tyrosyl-[protein] + phosphate. It catalyses the reaction O-phospho-L-seryl-[protein] + H2O = L-seryl-[protein] + phosphate. Functionally, serine/tyrosine phosphatase which down-regulates cellular antiviral response by dephosphorylating activated host STAT1 and blocking interferon (IFN)-stimulated innate immune responses. Dephosphorylates the OPG144 protein. This chain is Dual specificity protein phosphatase OPG106 (OPG106), found in Homo sapiens (Human).